The sequence spans 146 residues: Basic phospholipase A2 (146 aa).

Positions 1–21 (MNPAHLLVLAAVCVSLLGASS) are cleaved as a signal peptide. Positions 22 to 27 (VPPRPL) are excised as a propeptide. 7 cysteine pairs are disulfide-bonded: Cys38–Cys97, Cys52–Cys145, Cys54–Cys70, Cys69–Cys127, Cys76–Cys120, Cys86–Cys113, and Cys106–Cys118. Residues Tyr53, Gly55, and Gly57 each coordinate Ca(2+). The active site involves His73. A Ca(2+)-binding site is contributed by Asp74. Asn109 carries N-linked (GlcNAc...) asparagine glycosylation. The active site involves Asp121.

It belongs to the phospholipase A2 family. Group I subfamily. D49 sub-subfamily. Requires Ca(2+) as cofactor. In terms of tissue distribution, expressed by the venom gland.

The protein localises to the secreted. The enzyme catalyses a 1,2-diacyl-sn-glycero-3-phosphocholine + H2O = a 1-acyl-sn-glycero-3-phosphocholine + a fatty acid + H(+). Its function is as follows. PLA2 catalyzes the calcium-dependent hydrolysis of the 2-acyl groups in 3-sn-phosphoglycerides. The polypeptide is Basic phospholipase A2 (Micrurus corallinus (Brazilian coral snake)).